The following is a 216-amino-acid chain: Ribose-5-phosphate isomerase A (216 aa).

Substrate contacts are provided by residues 26–29 (TGST), 79–82 (DGAD), and 92–95 (KGGG). Residue Glu-101 is the Proton acceptor of the active site. Residue Lys-119 participates in substrate binding.

Belongs to the ribose 5-phosphate isomerase family. As to quaternary structure, homodimer.

The enzyme catalyses aldehydo-D-ribose 5-phosphate = D-ribulose 5-phosphate. The protein operates within carbohydrate degradation; pentose phosphate pathway; D-ribose 5-phosphate from D-ribulose 5-phosphate (non-oxidative stage): step 1/1. In terms of biological role, catalyzes the reversible conversion of ribose-5-phosphate to ribulose 5-phosphate. This is Ribose-5-phosphate isomerase A from Legionella pneumophila (strain Corby).